Reading from the N-terminus, the 401-residue chain is Argininosuccinate synthase (401 aa).

9-17 (AYSGGLDTS) contributes to the ATP binding site. Y86 lines the L-citrulline pocket. Position 116 (G116) interacts with ATP. 3 residues coordinate L-aspartate: T118, N122, and D123. N122 serves as a coordination point for L-citrulline. The L-citrulline site is built by R126, S174, S183, E259, and Y271.

The protein belongs to the argininosuccinate synthase family. Type 1 subfamily. Homotetramer.

It localises to the cytoplasm. It catalyses the reaction L-citrulline + L-aspartate + ATP = 2-(N(omega)-L-arginino)succinate + AMP + diphosphate + H(+). It participates in amino-acid biosynthesis; L-arginine biosynthesis; L-arginine from L-ornithine and carbamoyl phosphate: step 2/3. The polypeptide is Argininosuccinate synthase (Bacillus cereus (strain Q1)).